The chain runs to 116 residues: Large ribosomal subunit protein bL19 (116 aa).

This sequence belongs to the bacterial ribosomal protein bL19 family.

In terms of biological role, this protein is located at the 30S-50S ribosomal subunit interface and may play a role in the structure and function of the aminoacyl-tRNA binding site. This chain is Large ribosomal subunit protein bL19, found in Mycoplasmopsis agalactiae (strain NCTC 10123 / CIP 59.7 / PG2) (Mycoplasma agalactiae).